The primary structure comprises 824 residues: LPS-assembly protein LptD (824 aa).

Disordered stretches follow at residues 1–26 (MTEQ…RRVR) and 67–117 (TQTP…PAYV). The signal sequence occupies residues 1–48 (MTEQRRSPHHPATRPPAPPGTSRRVRLPASALRPLVLAMAGLTVSAHA). The segment covering 98-115 (NTLNLSPSSTPSNPNAPA) has biased composition (low complexity).

Belongs to the LptD family. As to quaternary structure, component of the lipopolysaccharide transport and assembly complex. Interacts with LptE and LptA.

The protein resides in the cell outer membrane. Functionally, together with LptE, is involved in the assembly of lipopolysaccharide (LPS) at the surface of the outer membrane. The protein is LPS-assembly protein LptD of Cupriavidus metallidurans (strain ATCC 43123 / DSM 2839 / NBRC 102507 / CH34) (Ralstonia metallidurans).